The sequence spans 255 residues: Proteasome subunit alpha (255 aa).

A compositionally biased stretch (polar residues) spans 190–201; sequence PSTSGASGNGET. Residues 190–255 are disordered; sequence PSTSGASGNG…DKSSGDGEQN (66 aa). The segment covering 202–217 has biased composition (basic and acidic residues); that stretch reads EPSKLEVAILDRERPG.

Belongs to the peptidase T1A family. In terms of assembly, the 20S proteasome core is composed of 14 alpha and 14 beta subunits that assemble into four stacked heptameric rings, resulting in a barrel-shaped structure. The two inner rings, each composed of seven catalytic beta subunits, are sandwiched by two outer rings, each composed of seven alpha subunits. The catalytic chamber with the active sites is on the inside of the barrel. Has a gated structure, the ends of the cylinder being occluded by the N-termini of the alpha-subunits. Is capped by the proteasome-associated ATPase, ARC.

The protein resides in the cytoplasm. Its pathway is protein degradation; proteasomal Pup-dependent pathway. Its activity is regulated as follows. The formation of the proteasomal ATPase ARC-20S proteasome complex, likely via the docking of the C-termini of ARC into the intersubunit pockets in the alpha-rings, may trigger opening of the gate for substrate entry. Interconversion between the open-gate and close-gate conformations leads to a dynamic regulation of the 20S proteasome proteolysis activity. Functionally, component of the proteasome core, a large protease complex with broad specificity involved in protein degradation. This Saccharomonospora viridis (strain ATCC 15386 / DSM 43017 / JCM 3036 / CCUG 5913 / NBRC 12207 / NCIMB 9602 / P101) (Thermoactinomyces viridis) protein is Proteasome subunit alpha.